Reading from the N-terminus, the 418-residue chain is tRNA(Met) cytidine acetate ligase (418 aa).

3 residues coordinate ATP: Gly-95, Asn-161, and Arg-186.

This sequence belongs to the TmcAL family.

Its subcellular location is the cytoplasm. The enzyme catalyses cytidine(34) in elongator tRNA(Met) + acetate + ATP = N(4)-acetylcytidine(34) in elongator tRNA(Met) + AMP + diphosphate. In terms of biological role, catalyzes the formation of N(4)-acetylcytidine (ac(4)C) at the wobble position of elongator tRNA(Met), using acetate and ATP as substrates. First activates an acetate ion to form acetyladenylate (Ac-AMP) and then transfers the acetyl group to tRNA to form ac(4)C34. The chain is tRNA(Met) cytidine acetate ligase from Thermotoga petrophila (strain ATCC BAA-488 / DSM 13995 / JCM 10881 / RKU-1).